We begin with the raw amino-acid sequence, 462 residues long: MGYLYYLLHPYQLRSIIQWKVWHDPVHERDPSTESPELQECFRYLNLTSRSFAAVIQELNHELLVPITLFYLCLRGLDTIEDDMTLPLEKKIPILRNFHTTMNEDGWQFHESQEKDKELLEHFDVVITELKKIKAPYHEIITDMTRKMGNGMADYAENEEMIKNGVQTIEEYELYCHYVAGLVGEGLTRLFVESELANPKLAERPSLTESMGQFLQKTNIIRDLHEDWQDGRRWYPKEIWSQHVDKWEDMFNPAQQTKAIECVSHMVLDALKHSEECLFYMAGIKDQSVFNFVAIPEGMAIATLELVFRNPEVLKRNVKITKGDACKIMFECTQNLFTVCEVFKRYTRKIAKKNDPRDPNFLAISAQCAKIEQFIETLFPKQDPKKLTLTQAQAQNKEPTMDAGEAVVLFGVVIAALVCISGLMLGTAWFFGARFDHIFREASVFLPGREKATPMITGHEEL.

Residues 406–426 (AVVLFGVVIAALVCISGLMLG) traverse the membrane as a helical segment.

It belongs to the phytoene/squalene synthase family. Mg(2+) is required as a cofactor.

The protein resides in the endoplasmic reticulum membrane. It is found in the microsome. It catalyses the reaction 2 (2E,6E)-farnesyl diphosphate + NADPH + H(+) = squalene + 2 diphosphate + NADP(+). The enzyme catalyses 2 (2E,6E)-farnesyl diphosphate + NADH + H(+) = squalene + 2 diphosphate + NAD(+). The protein operates within terpene metabolism; lanosterol biosynthesis; lanosterol from farnesyl diphosphate: step 1/3. It functions in the pathway steroid metabolism; ergosterol biosynthesis. In terms of biological role, squalene synthase; part of the third module of ergosterol biosynthesis pathway that includes the late steps of the pathway. ERG9 produces squalene from 2 farnesyl pyrophosphate moieties. The third module or late pathway involves the ergosterol synthesis itself through consecutive reactions that mainly occur in the endoplasmic reticulum (ER) membrane. Firstly, the squalene synthase ERG9 catalyzes the condensation of 2 farnesyl pyrophosphate moieties to form squalene, which is the precursor of all steroids. Squalene synthase is crucial for balancing the incorporation of farnesyl diphosphate (FPP) into sterol and nonsterol isoprene synthesis. Secondly, squalene is converted into lanosterol by the consecutive action of the squalene epoxidase ERG1 and the lanosterol synthase ERG7. Then, the delta(24)-sterol C-methyltransferase ERG6 methylates lanosterol at C-24 to produce eburicol. Eburicol is the substrate of the sterol 14-alpha demethylase encoded by CYP51A, CYP51B and CYP51C, to yield 4,4,24-trimethyl ergosta-8,14,24(28)-trienol. CYP51B encodes the enzyme primarily responsible for sterol 14-alpha-demethylation, and plays an essential role in ascospore formation. CYP51A encodes an additional sterol 14-alpha-demethylase, induced on ergosterol depletion and responsible for the intrinsic variation in azole sensitivity. The third CYP51 isoform, CYP51C, does not encode a sterol 14-alpha-demethylase, but is required for full virulence on host wheat ears. The C-14 reductase ERG24 then reduces the C14=C15 double bond which leads to 4,4-dimethylfecosterol. A sequence of further demethylations at C-4, involving the C-4 demethylation complex containing the C-4 methylsterol oxidases ERG25, the sterol-4-alpha-carboxylate 3-dehydrogenase ERG26 and the 3-keto-steroid reductase ERG27, leads to the production of fecosterol via 4-methylfecosterol. ERG28 has a role as a scaffold to help anchor ERG25, ERG26 and ERG27 to the endoplasmic reticulum. The C-8 sterol isomerase ERG2 then catalyzes the reaction which results in unsaturation at C-7 in the B ring of sterols and thus converts fecosterol to episterol. The sterol-C5-desaturases ERG3A and ERG3BB then catalyze the introduction of a C-5 double bond in the B ring to produce 5-dehydroepisterol. The C-22 sterol desaturases ERG5A and ERG5B further convert 5-dehydroepisterol into ergosta-5,7,22,24(28)-tetraen-3beta-ol by forming the C-22(23) double bond in the sterol side chain. Finally, ergosta-5,7,22,24(28)-tetraen-3beta-ol is substrate of the C-24(28) sterol reductase ERG4 to produce ergosterol. The sequence is that of Squalene synthase ERG9 from Gibberella zeae (strain ATCC MYA-4620 / CBS 123657 / FGSC 9075 / NRRL 31084 / PH-1) (Wheat head blight fungus).